Reading from the N-terminus, the 388-residue chain is Mannitol-1-phosphate 5-dehydrogenase (388 aa).

NAD(+) is bound at residue 4–15 (AVHFGAGNIGRG).

Belongs to the mannitol dehydrogenase family.

It catalyses the reaction D-mannitol 1-phosphate + NAD(+) = beta-D-fructose 6-phosphate + NADH + H(+). The polypeptide is Mannitol-1-phosphate 5-dehydrogenase (Lactococcus lactis subsp. cremoris (strain SK11)).